A 225-amino-acid polypeptide reads, in one-letter code: Fibronectin type III domain-containing protein (225 aa).

Residues 1-17 form the signal peptide; that stretch reads MFSFGIILLTVVSFTNA. One can recognise a Fibronectin type-III domain in the interval 106–206; the sequence is PPTNVIVEST…MPLNVKTPDI (101 aa).

As to expression, component of the organic matrix of calcified shell layers like nacre and prisms.

The protein resides in the secreted. This chain is Fibronectin type III domain-containing protein, found in Mytilus californianus (California mussel).